A 219-amino-acid polypeptide reads, in one-letter code: Octanoyltransferase (219 aa).

Residues 31 to 206 (TASADEIWLV…ECLRLMKASA (176 aa)) enclose the BPL/LPL catalytic domain. Substrate contacts are provided by residues 70-77 (RGGQVTFH), 137-139 (SLG), and 150-152 (GLA). C168 (acyl-thioester intermediate) is an active-site residue.

The protein belongs to the LipB family.

The protein localises to the cytoplasm. The catalysed reaction is octanoyl-[ACP] + L-lysyl-[protein] = N(6)-octanoyl-L-lysyl-[protein] + holo-[ACP] + H(+). It participates in protein modification; protein lipoylation via endogenous pathway; protein N(6)-(lipoyl)lysine from octanoyl-[acyl-carrier-protein]: step 1/2. In terms of biological role, catalyzes the transfer of endogenously produced octanoic acid from octanoyl-acyl-carrier-protein onto the lipoyl domains of lipoate-dependent enzymes. Lipoyl-ACP can also act as a substrate although octanoyl-ACP is likely to be the physiological substrate. The chain is Octanoyltransferase from Sodalis glossinidius (strain morsitans).